We begin with the raw amino-acid sequence, 564 residues long: Arginine--tRNA ligase (564 aa).

A 'HIGH' region motif is present at residues 136–146 (ANPTGPLHMGN).

This sequence belongs to the class-I aminoacyl-tRNA synthetase family. As to quaternary structure, monomer.

The protein localises to the cytoplasm. The catalysed reaction is tRNA(Arg) + L-arginine + ATP = L-arginyl-tRNA(Arg) + AMP + diphosphate. The sequence is that of Arginine--tRNA ligase from Ruminiclostridium cellulolyticum (strain ATCC 35319 / DSM 5812 / JCM 6584 / H10) (Clostridium cellulolyticum).